Here is a 473-residue protein sequence, read N- to C-terminus: Inactive pancreatic lipase-related protein 1 (473 aa).

Residues 1–17 form the signal peptide; sequence MLILWTIPLFLLGAAQG. 2 cysteine pairs are disulfide-bonded: Cys-21-Cys-27 and Cys-109-Cys-120. Catalysis depends on Ser-171, which acts as the Nucleophile. The active-site Charge relay system is the Asp-194. Glu-205, Arg-208, Asp-210, and Asp-213 together coordinate Ca(2+). Cys-255 and Cys-279 are oxidised to a cystine. His-281 functions as the Charge relay system in the catalytic mechanism. 3 cysteine pairs are disulfide-bonded: Cys-303–Cys-314, Cys-317–Cys-322, and Cys-451–Cys-467. Residues 356–467 enclose the PLAT domain; that stretch reads WRYRVSLTFS…EDILLTLLPC (112 aa).

The protein belongs to the AB hydrolase superfamily. Lipase family. In terms of tissue distribution, expressed in female, but not in male, lacrimal gland. Expressed in male and female sublingual gland and pancreas.

The protein resides in the secreted. May function as inhibitor of dietary triglyceride digestion. Lacks detectable lipase activity (in vitro). The protein is Inactive pancreatic lipase-related protein 1 (Pnliprp1) of Mus musculus (Mouse).